A 303-amino-acid chain; its full sequence is Tyrosine recombinase XerC (303 aa).

One can recognise a Core-binding (CB) domain in the interval Ile-3–Val-89. One can recognise a Tyr recombinase domain in the interval Lys-110–Arg-297. Catalysis depends on residues Arg-150, Lys-174, His-249, Arg-252, and His-275. The active-site O-(3'-phospho-DNA)-tyrosine intermediate is the Tyr-284.

The protein belongs to the 'phage' integrase family. XerC subfamily. As to quaternary structure, forms a cyclic heterotetrameric complex composed of two molecules of XerC and two molecules of XerD.

It is found in the cytoplasm. Site-specific tyrosine recombinase, which acts by catalyzing the cutting and rejoining of the recombining DNA molecules. The XerC-XerD complex is essential to convert dimers of the bacterial chromosome into monomers to permit their segregation at cell division. It also contributes to the segregational stability of plasmids. The sequence is that of Tyrosine recombinase XerC from Halalkalibacterium halodurans (strain ATCC BAA-125 / DSM 18197 / FERM 7344 / JCM 9153 / C-125) (Bacillus halodurans).